A 145-amino-acid chain; its full sequence is MAKKVTGQVELMIPAQQAAPSPPVGPALGQHGVNIMEFVKSFNAATANMKPGTIVPVVITIYSDRSFTFILKTPPASYLLKEAAGIKTGSGDPKRNKVGKITVNQLREIAEMKLKDLNTEDIEMAMRTIAGTARSMGIEIEGYKG.

It belongs to the universal ribosomal protein uL11 family. Part of the ribosomal stalk of the 50S ribosomal subunit. Interacts with L10 and the large rRNA to form the base of the stalk. L10 forms an elongated spine to which L12 dimers bind in a sequential fashion forming a multimeric L10(L12)X complex. Post-translationally, one or more lysine residues are methylated.

Functionally, forms part of the ribosomal stalk which helps the ribosome interact with GTP-bound translation factors. In Sulfurihydrogenibium sp. (strain YO3AOP1), this protein is Large ribosomal subunit protein uL11.